Consider the following 730-residue polypeptide: Rap1 GTPase-activating protein 2 (730 aa).

Residues 247-463 (IVAYDEHEVN…RTRAALLDNL (217 aa)) enclose the Rap-GAP domain. 2 disordered regions span residues 510 to 668 (MVGS…STAS) and 698 to 730 (SRSP…STSH). Composition is skewed to polar residues over residues 535-557 (GEVT…QSRS) and 597-612 (HSSQ…NPSS). Over residues 617-630 (PNKDRPFVKLKENG) the composition is skewed to basic and acidic residues. Low complexity predominate over residues 631 to 651 (RSNISRSSSSTSSFSSTAGES). Residues 699-712 (RSPTDIKNRNSPRS) show a composition bias toward polar residues.

Its subcellular location is the cytoplasm. Its function is as follows. GTPase activator for the nuclear Ras-related regulatory protein RAP-1A (KREV-1), converting it to the putatively inactive GDP-bound state. This chain is Rap1 GTPase-activating protein 2 (RAP1GAP2), found in Gallus gallus (Chicken).